A 396-amino-acid polypeptide reads, in one-letter code: S-adenosylmethionine synthase (396 aa).

His-16 provides a ligand contact to ATP. Asp-18 contacts Mg(2+). Glu-44 contacts K(+). L-methionine contacts are provided by Glu-57 and Gln-100. The flexible loop stretch occupies residues Gln-100–Arg-110. ATP is bound by residues Asp-165–Lys-167, Asp-240, Arg-246–Lys-247, Ala-263, and Lys-267. Asp-240 contributes to the L-methionine binding site. Lys-271 contributes to the L-methionine binding site.

This sequence belongs to the AdoMet synthase family. In terms of assembly, homotetramer; dimer of dimers. Mg(2+) serves as cofactor. K(+) is required as a cofactor.

The protein resides in the cytoplasm. It catalyses the reaction L-methionine + ATP + H2O = S-adenosyl-L-methionine + phosphate + diphosphate. The protein operates within amino-acid biosynthesis; S-adenosyl-L-methionine biosynthesis; S-adenosyl-L-methionine from L-methionine: step 1/1. In terms of biological role, catalyzes the formation of S-adenosylmethionine (AdoMet) from methionine and ATP. The overall synthetic reaction is composed of two sequential steps, AdoMet formation and the subsequent tripolyphosphate hydrolysis which occurs prior to release of AdoMet from the enzyme. The protein is S-adenosylmethionine synthase of Pseudomonas syringae pv. tomato (strain ATCC BAA-871 / DC3000).